A 276-amino-acid chain; its full sequence is Undecaprenyl-diphosphatase (276 aa).

A run of 7 helical transmembrane segments spans residues 1–21 (MSWL…FLPV), 39–59 (AGAS…LVYF), 84–104 (YWLG…GLLF), 115–135 (LWLV…AEYY), 188–208 (FGFL…LPDA), 222–242 (QLFV…AWFL), and 253–273 (FVGY…AGVV).

Belongs to the UppP family.

Its subcellular location is the cell membrane. The catalysed reaction is di-trans,octa-cis-undecaprenyl diphosphate + H2O = di-trans,octa-cis-undecaprenyl phosphate + phosphate + H(+). Functionally, catalyzes the dephosphorylation of undecaprenyl diphosphate (UPP). Confers resistance to bacitracin. The protein is Undecaprenyl-diphosphatase of Mycolicibacterium vanbaalenii (strain DSM 7251 / JCM 13017 / BCRC 16820 / KCTC 9966 / NRRL B-24157 / PYR-1) (Mycobacterium vanbaalenii).